Reading from the N-terminus, the 393-residue chain is Formate-dependent phosphoribosylglycinamide formyltransferase (393 aa).

Residues 22–23 and glutamate 82 each bind N(1)-(5-phospho-beta-D-ribosyl)glycinamide; that span reads EL. Residues arginine 114, lysine 155, 160-165, 195-198, and glutamate 203 each bind ATP; these read SSGKGQ and ESFV. In terms of domain architecture, ATP-grasp spans 119 to 308; the sequence is RLAAEEVGLK…EFALHVRAIL (190 aa). The Mg(2+) site is built by glutamate 267 and glutamate 279. Residues aspartate 286, lysine 356, and 363–364 contribute to the N(1)-(5-phospho-beta-D-ribosyl)glycinamide site; that span reads RR.

This sequence belongs to the PurK/PurT family. As to quaternary structure, homodimer.

It catalyses the reaction N(1)-(5-phospho-beta-D-ribosyl)glycinamide + formate + ATP = N(2)-formyl-N(1)-(5-phospho-beta-D-ribosyl)glycinamide + ADP + phosphate + H(+). It participates in purine metabolism; IMP biosynthesis via de novo pathway; N(2)-formyl-N(1)-(5-phospho-D-ribosyl)glycinamide from N(1)-(5-phospho-D-ribosyl)glycinamide (formate route): step 1/1. Its function is as follows. Involved in the de novo purine biosynthesis. Catalyzes the transfer of formate to 5-phospho-ribosyl-glycinamide (GAR), producing 5-phospho-ribosyl-N-formylglycinamide (FGAR). Formate is provided by PurU via hydrolysis of 10-formyl-tetrahydrofolate. The chain is Formate-dependent phosphoribosylglycinamide formyltransferase from Maridesulfovibrio salexigens (strain ATCC 14822 / DSM 2638 / NCIMB 8403 / VKM B-1763) (Desulfovibrio salexigens).